Here is a 234-residue protein sequence, read N- to C-terminus: ATP synthase subunit a 2 (234 aa).

6 consecutive transmembrane segments (helical) span residues 29–49 (FFQHVTHTWLVMAILIGVGLL), 90–110 (LIATLALFLLVSNLIGLIPGF), 116–136 (SLNTNAALAVGVFLVTHIVGV), 147–167 (FMGPVWWLTPLILPIELIGHL), 186–206 (IVLMIFFSLVPLLLPIPMMLM), and 207–227 (GILVAFIQTFVFMLLSMIYIA).

It belongs to the ATPase A chain family. F-type ATPases have 2 components, CF(1) - the catalytic core - and CF(0) - the membrane proton channel. CF(1) has five subunits: alpha(3), beta(3), gamma(1), delta(1), epsilon(1). CF(0) has three main subunits: a(1), b(2) and c(9-12). The alpha and beta chains form an alternating ring which encloses part of the gamma chain. CF(1) is attached to CF(0) by a central stalk formed by the gamma and epsilon chains, while a peripheral stalk is formed by the delta and b chains.

The protein localises to the cell inner membrane. In terms of biological role, key component of the proton channel; it plays a direct role in the translocation of protons across the membrane. In Syntrophotalea carbinolica (strain DSM 2380 / NBRC 103641 / GraBd1) (Pelobacter carbinolicus), this protein is ATP synthase subunit a 2.